A 572-amino-acid polypeptide reads, in one-letter code: Proline--tRNA ligase (572 aa).

Belongs to the class-II aminoacyl-tRNA synthetase family. ProS type 1 subfamily. In terms of assembly, homodimer.

It is found in the cytoplasm. The catalysed reaction is tRNA(Pro) + L-proline + ATP = L-prolyl-tRNA(Pro) + AMP + diphosphate. Catalyzes the attachment of proline to tRNA(Pro) in a two-step reaction: proline is first activated by ATP to form Pro-AMP and then transferred to the acceptor end of tRNA(Pro). As ProRS can inadvertently accommodate and process non-cognate amino acids such as alanine and cysteine, to avoid such errors it has two additional distinct editing activities against alanine. One activity is designated as 'pretransfer' editing and involves the tRNA(Pro)-independent hydrolysis of activated Ala-AMP. The other activity is designated 'posttransfer' editing and involves deacylation of mischarged Ala-tRNA(Pro). The misacylated Cys-tRNA(Pro) is not edited by ProRS. This Shigella dysenteriae serotype 1 (strain Sd197) protein is Proline--tRNA ligase.